Reading from the N-terminus, the 592-residue chain is Bifunctional purine biosynthesis protein ATIC (592 aa).

At M1 the chain carries N-acetylmethionine. The MGS-like domain maps to 2–146 (APGQLALFSV…KNHARVTVVC (145 aa)). The tract at residues 2–198 (APGQLALFSV…ISDYFRKQYS (197 aa)) is IMP cyclohydrolase. IMP is bound by residues 12–14 (SDK), 34–37 (SGGT), 64–67 (RVKT), 101–102 (CN), and 125–126 (DI). The active-site Proton donor/acceptor; for FAICAR cyclization activity is the K137. K199 is subject to N6-acetyllysine. Residues 199–592 (KGVSQMPLRY…AHTNLRLFHH (394 aa)) are AICAR formyltransferase. 5-amino-1-(5-phospho-beta-D-ribosyl)imidazole-4-carboxamide contacts are provided by residues 207–208 (RY), H267, G316, D339, N431, and R451. Catalysis depends on H267, which acts as the Proton acceptor; for AICAR formyltransferase activity. Residue I452 participates in (6R)-10-formyltetrahydrofolate binding. F541 contributes to the 5-amino-1-(5-phospho-beta-D-ribosyl)imidazole-4-carboxamide binding site. (6R)-10-formyltetrahydrofolate contacts are provided by residues D546 and 565–566 (SA). 5-amino-1-(5-phospho-beta-D-ribosyl)imidazole-4-carboxamide is bound at residue R588.

The protein belongs to the PurH family. In terms of assembly, homodimer. Associates with internalized INSR complexes on Golgi/endosomal membranes. Interacts with INSR; ATIC together with PRKAA2/AMPK2 and HACD3/PTPLAD1 is proposed to be part of a signaling network regulating INSR autophosphorylation and endocytosis. In terms of tissue distribution, present in the heart, brain, placenta, lung, liver, skeletal muscle, kidney, pancreas.

It is found in the cytoplasm. The protein resides in the cytosol. It carries out the reaction (6R)-10-formyltetrahydrofolate + 5-amino-1-(5-phospho-beta-D-ribosyl)imidazole-4-carboxamide = 5-formamido-1-(5-phospho-D-ribosyl)imidazole-4-carboxamide + (6S)-5,6,7,8-tetrahydrofolate. The catalysed reaction is 10-formyldihydrofolate + 5-amino-1-(5-phospho-beta-D-ribosyl)imidazole-4-carboxamide = 5-formamido-1-(5-phospho-D-ribosyl)imidazole-4-carboxamide + 7,8-dihydrofolate. It catalyses the reaction IMP + H2O = 5-formamido-1-(5-phospho-D-ribosyl)imidazole-4-carboxamide. The enzyme catalyses 5-amino-1-(5-phospho-D-ribosyl)imidazole-4-thiocarboxamide + 10-formyldihydrofolate = 6-thio-IMP + 7,8-dihydrofolate + H2O. It functions in the pathway purine metabolism; IMP biosynthesis via de novo pathway; 5-formamido-1-(5-phospho-D-ribosyl)imidazole-4-carboxamide from 5-amino-1-(5-phospho-D-ribosyl)imidazole-4-carboxamide (10-formyl THF route): step 1/1. Its pathway is purine metabolism; IMP biosynthesis via de novo pathway; IMP from 5-formamido-1-(5-phospho-D-ribosyl)imidazole-4-carboxamide: step 1/1. AMP and XMP inhibit AICAR formyltransferase activity. AICAR formyltransferase activity is inhibited by N-(6-fluoro-1-oxo-1,2-dihydroisoquinolin-7-yl)-5- [(3R)-3-hydroxypyrrolidin-1-yl]thiophene-2-sulfonamide (LSN 3213128), which acts as a tumor suppression in cancer cell lines. Its function is as follows. Bifunctional enzyme that catalyzes the last two steps of purine biosynthesis. Acts as a transformylase that incorporates a formyl group to the AMP analog AICAR (5-amino-1-(5-phospho-beta-D-ribosyl)imidazole-4-carboxamide) to produce the intermediate formyl-AICAR (FAICAR). Can use both 10-formyldihydrofolate and 10-formyltetrahydrofolate as the formyl donor in this reaction. Also catalyzes the cyclization of FAICAR to inosine monophosphate (IMP). Is able to convert thio-AICAR to 6-mercaptopurine ribonucleotide, an inhibitor of purine biosynthesis used in the treatment of human leukemias. Promotes insulin receptor/INSR autophosphorylation and is involved in INSR internalization. The protein is Bifunctional purine biosynthesis protein ATIC of Homo sapiens (Human).